Reading from the N-terminus, the 274-residue chain is Large ribosomal subunit protein uL2 (274 aa).

A disordered region spans residues 221–254 (RGTAMNPADHPHGGGEGRTFGKHPVSPWGLPTKG).

The protein belongs to the universal ribosomal protein uL2 family. In terms of assembly, part of the 50S ribosomal subunit. Forms a bridge to the 30S subunit in the 70S ribosome.

Functionally, one of the primary rRNA binding proteins. Required for association of the 30S and 50S subunits to form the 70S ribosome, for tRNA binding and peptide bond formation. It has been suggested to have peptidyltransferase activity; this is somewhat controversial. Makes several contacts with the 16S rRNA in the 70S ribosome. The sequence is that of Large ribosomal subunit protein uL2 from Sulfurihydrogenibium sp. (strain YO3AOP1).